The sequence spans 204 residues: MILSDKDIIDYVTSKRIIIKPFNKDFVGPCSYDVTLGDEFIIYDDEVYDLSKELNYKRIKIKNSILVCPLNYNLTEEKINYFKEKYNVDYVVEGGVLGTTNEYIELPNDISAQYQGRSSLGRVFLTSHQTAGWIDAGFKGKITLEIVAFDKPVILYKNQRIGQLIFSKLLSPADVGYSERKTSKYAYQKSVMPSLIHLDNHKKD.

Residues 117–122 (RSSLGR), H128, G132, D135, 143–145 (TLE), Q163, Y177, K184, and Q188 contribute to the dCTP site. The Proton donor/acceptor role is filled by E145.

Homotrimer. Two trimers assemble into a hexamer by stacking on top of each other. The cofactor is Mg(2+).

The enzyme catalyses dCTP + 2 H2O = dUMP + NH4(+) + diphosphate. The protein operates within pyrimidine metabolism; dUMP biosynthesis; dUMP from dCTP: step 1/1. With respect to regulation, inhibited by dTTP. Its function is as follows. Bifunctional enzyme that catalyzes both the deamination of dCTP to dUTP and the hydrolysis of dUTP to dUMP without releasing the toxic dUTP intermediate. It also acts as a dUTP diphosphatase with a lower affinity for dUTP than for dCTP. This chain is dCTP deaminase, dUMP-forming, found in Methanocaldococcus jannaschii (strain ATCC 43067 / DSM 2661 / JAL-1 / JCM 10045 / NBRC 100440) (Methanococcus jannaschii).